Here is a 552-residue protein sequence, read N- to C-terminus: Ribulokinase (552 aa).

The protein belongs to the ribulokinase family.

It catalyses the reaction D-ribulose + ATP = D-ribulose 5-phosphate + ADP + H(+). The catalysed reaction is L-ribulose + ATP = L-ribulose 5-phosphate + ADP + H(+). It participates in carbohydrate degradation; L-arabinose degradation via L-ribulose; D-xylulose 5-phosphate from L-arabinose (bacterial route): step 2/3. This is Ribulokinase from Bacillus licheniformis (strain ATCC 14580 / DSM 13 / JCM 2505 / CCUG 7422 / NBRC 12200 / NCIMB 9375 / NCTC 10341 / NRRL NRS-1264 / Gibson 46).